A 448-amino-acid polypeptide reads, in one-letter code: Methylenetetrahydrofolate--tRNA-(uracil-5-)-methyltransferase TrmFO (448 aa).

13–18 lines the FAD pocket; it reads GAGLAG.

It belongs to the MnmG family. TrmFO subfamily. The cofactor is FAD.

The protein resides in the cytoplasm. The catalysed reaction is uridine(54) in tRNA + (6R)-5,10-methylene-5,6,7,8-tetrahydrofolate + NADH + H(+) = 5-methyluridine(54) in tRNA + (6S)-5,6,7,8-tetrahydrofolate + NAD(+). It carries out the reaction uridine(54) in tRNA + (6R)-5,10-methylene-5,6,7,8-tetrahydrofolate + NADPH + H(+) = 5-methyluridine(54) in tRNA + (6S)-5,6,7,8-tetrahydrofolate + NADP(+). In terms of biological role, catalyzes the folate-dependent formation of 5-methyl-uridine at position 54 (M-5-U54) in all tRNAs. In Streptococcus pyogenes serotype M18 (strain MGAS8232), this protein is Methylenetetrahydrofolate--tRNA-(uracil-5-)-methyltransferase TrmFO.